We begin with the raw amino-acid sequence, 225 residues long: MCHVIVTCRSMLWTLLSIVAAFSELIAFLSTDWLVGFPRAPDAGFSPLGATAAGEAYRPTLGIYGRCIRVPHYRRGVLCGPYAVHFGEIASGFWQATAIFLAAGILLLCAVAFISIFTMCFQSIMKKSIFNVCGLLQAIAGLFLIVGLVLYPAGWGSQKVQLYCGPDSSPYRLGLCSAGWAFYTALAGTVLCFLCAVFSAQAEIATSSDKVQEEIQEGKSLICLL.

4 helical membrane passes run 11-31 (MLWT…FLST), 99-119 (IFLA…IFTM), 129-149 (IFNV…VGLV), and 178-198 (AGWA…CAVF).

Belongs to the LHFP family.

It localises to the membrane. In terms of biological role, plays a role in fertility. Involved in distal reproductive tract development. In Danio rerio (Zebrafish), this protein is LHFPL tetraspan subfamily member 2a protein.